Consider the following 86-residue polypeptide: Small ribosomal subunit protein bS16 (86 aa).

Belongs to the bacterial ribosomal protein bS16 family.

The polypeptide is Small ribosomal subunit protein bS16 (Syntrophotalea carbinolica (strain DSM 2380 / NBRC 103641 / GraBd1) (Pelobacter carbinolicus)).